A 1015-amino-acid chain; its full sequence is PHD finger protein 20-like protein 1 (1015 aa).

The 61-residue stretch at 11–71 (ITFEIGARLE…SNRLRPLERP (61 aa)) folds into the Tudor 1 domain. Glycyl lysine isopeptide (Lys-Gly) (interchain with G-Cter in SUMO2) cross-links involve residues Lys-75 and Lys-79. Residues 85-141 (FDFKAGEEVLARWTDCRYYPAKIEAINKEGTFTVQFYDGVIRCLKRMHIKAMPEDAK) enclose the Tudor 2 domain. 2 disordered regions span residues 183–206 (AKNK…RDGG) and 309–367 (EQAI…KAPK). Polar residues-rich tracts occupy residues 186 to 197 (KTGSKPRTSANS) and 315 to 346 (KPQS…SSGK). The residue at position 368 (Ser-368) is a Phosphoserine. Disordered stretches follow at residues 389-455 (VINK…SSVP) and 478-513 (CGSE…NPTS). Positions 404–415 (PCKHSERRRRSQ) are enriched in basic residues. Ser-432 carries the phosphoserine modification. Composition is skewed to polar residues over residues 443-453 (SISSQNQQESS) and 480-489 (SEVTGSQAPD). Lys-530 participates in a covalent cross-link: Glycyl lysine isopeptide (Lys-Gly) (interchain with G-Cter in SUMO2). Basic and acidic residues predominate over residues 539–565 (EKTSTAFGKRKEKDKERKEKRDKDHYK). The tract at residues 539–585 (EKTSTAFGKRKEKDKERKEKRDKDHYKPKQKKKKKKKKKSKQHDYSD) is disordered. Over residues 566-579 (PKQKKKKKKKKKSK) the composition is skewed to basic residues. A PHD-type zinc finger spans residues 681 to 729 (IVRCICELDEENGFMIQCEECLCWQHSVCMGLLEDSIPEQYICYICRDP). Lys-849 participates in a covalent cross-link: Glycyl lysine isopeptide (Lys-Gly) (interchain with G-Cter in SUMO2). The span at 859–878 (HSYQKPQSFSQDCHSLTDPG) shows a compositional bias: polar residues. The disordered stretch occupies residues 859–889 (HSYQKPQSFSQDCHSLTDPGSSDDDDVSSFE). A compositionally biased stretch (acidic residues) spans 879 to 889 (SSDDDDVSSFE). Lys-907 is subject to N6-acetyllysine.

In terms of assembly, interacts with methylated DNMT1 (DNMT1K142me1). Interacts with SOX2.

The protein resides in the nucleus. Is a negative regulator of proteasomal degradation of a set of methylated proteins, including DNMT1 and SOX2. Involved in the maintainance of embryonic stem cells pluripotency, through the regulation of SOX2 levels. This Rattus norvegicus (Rat) protein is PHD finger protein 20-like protein 1 (Phf20l1).